The chain runs to 367 residues: Probable butyrate kinase (367 aa).

The protein belongs to the acetokinase family.

The protein resides in the cytoplasm. The catalysed reaction is butanoate + ATP = butanoyl phosphate + ADP. This is Probable butyrate kinase from Bacillus cereus (strain ATCC 14579 / DSM 31 / CCUG 7414 / JCM 2152 / NBRC 15305 / NCIMB 9373 / NCTC 2599 / NRRL B-3711).